We begin with the raw amino-acid sequence, 760 residues long: MATAPLAFRLPFPFSFPSASRPPPSRILAPPTPRRLPLRLAAAAARRFRPPTADDEPPEAAEDSSHGLTRYDQLARSVERARIRQPEITPDNPLFSSPSTAGGGGGGSYDPDDEFFDEIDRAIAEKREEFTRRGLIKPSPASPPPSQSQPEDEDLTDELSPEEVIDLDEIRKLQGLSVVSVADEEDEEVEGGEDEDDGLPLDEDGEGFDVAEELGLEGARMRQPAFRMTLAELLDESKLVPVAVTGDQDVALAGVQRDASLVAAGDLFVCVGEDGLAGLTEADKRGAVAVVADQDLNIEGTLACRALVIVDDILTALRVLPACLYSRPSMNMAIIGVTGTDGVTTTTHLVKAMYEAMGVRTGLVGVLGTYAFSSNKLDARPDASSDPIAAQKLMATMLHNGTEAVVLEKGTDGMPPSGVDSEIDYDIAVLTNVRHTDEENGMTYEEYMSRMASLFSRMVDPERHRKVVNIDDPSAPFFAAQGGHDVPVVTYSFENKKADVHTLKYQLSLFETEVLVQTPHGILEISSGLLGRDNIYSILATVAVGIAVGAPLEDIVRGIEEVDAIPGRCELIDEEQAFGVIVDHARTPEALSRLLDGVRELGPRRIVTVVGCCGEKERGKRPVMTKIAADKSDVVMLTSDNPANEDPLDILDDMLAGVGWTMEEYLKYGANDYYPPLPNGHRLFLHDIRRVAVRAAVAMGEQGDVVVITGKGNDTYQIEGDKNEFFDDREECREALQYVDQLHRAGIDTSEFPWRLPESH.

The N-terminal 59 residues, 1–59, are a transit peptide targeting the chloroplast; sequence MATAPLAFRLPFPFSFPSASRPPPSRILAPPTPRRLPLRLAAAAARRFRPPTADDEPPE. Disordered stretches follow at residues 13–159 and 176–205; these read PFSF…TDEL and LSVV…DEDG. Over residues 20–34 the composition is skewed to pro residues; sequence SRPPPSRILAPPTPR. The span at 53-62 shows a compositional bias: acidic residues; sequence ADDEPPEAAE. Residues 118 to 132 show a composition bias toward basic and acidic residues; that stretch reads EIDRAIAEKREEFTR. Acidic residues-rich tracts occupy residues 150-159 and 182-205; these read PEDEDLTDEL and ADEE…DEDG.

Belongs to the MurCDEF family. MurE subfamily. In terms of assembly, component of the plastid-encoded plastid RNA polymerase (PEP) complex.

It localises to the plastid. It is found in the chloroplast. Functionally, required for the activity of the plastid-encoded RNA polymerase (PEP) and full expression of genes transcribed by PEP. Required for the proper build-up and formation of the PEP-complex. This chain is UDP-N-acetylmuramoyl-L-alanyl-D-glutamate--2,6-diaminopimelate ligase MurE homolog, chloroplastic, found in Zea mays (Maize).